Reading from the N-terminus, the 173-residue chain is Crossover junction endodeoxyribonuclease RuvC (173 aa).

Residues aspartate 8, glutamate 67, and aspartate 139 contribute to the active site. Mg(2+) is bound by residues aspartate 8, glutamate 67, and aspartate 139.

Belongs to the RuvC family. Homodimer which binds Holliday junction (HJ) DNA. The HJ becomes 2-fold symmetrical on binding to RuvC with unstacked arms; it has a different conformation from HJ DNA in complex with RuvA. In the full resolvosome a probable DNA-RuvA(4)-RuvB(12)-RuvC(2) complex forms which resolves the HJ. Requires Mg(2+) as cofactor.

It is found in the cytoplasm. It carries out the reaction Endonucleolytic cleavage at a junction such as a reciprocal single-stranded crossover between two homologous DNA duplexes (Holliday junction).. The RuvA-RuvB-RuvC complex processes Holliday junction (HJ) DNA during genetic recombination and DNA repair. Endonuclease that resolves HJ intermediates. Cleaves cruciform DNA by making single-stranded nicks across the HJ at symmetrical positions within the homologous arms, yielding a 5'-phosphate and a 3'-hydroxyl group; requires a central core of homology in the junction. The consensus cleavage sequence is 5'-(A/T)TT(C/G)-3'. Cleavage occurs on the 3'-side of the TT dinucleotide at the point of strand exchange. HJ branch migration catalyzed by RuvA-RuvB allows RuvC to scan DNA until it finds its consensus sequence, where it cleaves and resolves the cruciform DNA. This Enterobacter sp. (strain 638) protein is Crossover junction endodeoxyribonuclease RuvC.